The sequence spans 367 residues: Chorismate synthase (367 aa).

Residue Arg48 coordinates NADP(+). FMN contacts are provided by residues 125 to 127 (RAS), Gly290, 305 to 309 (KPTSS), and Arg333.

The protein belongs to the chorismate synthase family. Homotetramer. FMNH2 is required as a cofactor.

The catalysed reaction is 5-O-(1-carboxyvinyl)-3-phosphoshikimate = chorismate + phosphate. Its pathway is metabolic intermediate biosynthesis; chorismate biosynthesis; chorismate from D-erythrose 4-phosphate and phosphoenolpyruvate: step 7/7. Its function is as follows. Catalyzes the anti-1,4-elimination of the C-3 phosphate and the C-6 proR hydrogen from 5-enolpyruvylshikimate-3-phosphate (EPSP) to yield chorismate, which is the branch point compound that serves as the starting substrate for the three terminal pathways of aromatic amino acid biosynthesis. This reaction introduces a second double bond into the aromatic ring system. The sequence is that of Chorismate synthase from Protochlamydia amoebophila (strain UWE25).